The primary structure comprises 141 residues: Vesicle-associated membrane protein 4 (141 aa).

The disordered stretch occupies residues 1–51 (MPPKFKRHLNDDDVTGSVKSERRNLLEDDSDEEEDFFLRGPSGPRFGPRND). Over 1-115 (MPPKFKRHLN…RRQMWWRGCK (115 aa)) the chain is Cytoplasmic. Phosphoserine occurs at positions 17 and 30. The region spanning 52–112 (KIKHVQNQVD…KQLRRQMWWR (61 aa)) is the v-SNARE coiled-coil homology domain. The chain crosses the membrane as a helical; Anchor for type IV membrane protein span at residues 116–136 (IKAIMALVAAILLLVIIILIV). At 137–141 (MKYRT) the chain is on the vesicular side.

It belongs to the synaptobrevin family. In terms of assembly, identified in a complex containing STX6, STX12, VAMP4 and VTI1A. Interacts with BAIAP3; this interaction is increased in the presence of calcium.

The protein resides in the golgi apparatus. The protein localises to the trans-Golgi network membrane. In terms of biological role, involved in the pathway that functions to remove an inhibitor (probably synaptotagmin-4) of calcium-triggered exocytosis during the maturation of secretory granules. May be a marker for this sorting pathway that is critical for remodeling the secretory response of granule. The protein is Vesicle-associated membrane protein 4 (VAMP4) of Homo sapiens (Human).